The following is a 1792-amino-acid chain: Non-reducing polyketide synthase aptA (1792 aa).

An N-terminal acylcarrier protein transacylase domain (SAT) region spans residues Met1–Ala395. Residues His391–Asp824 form the Ketosynthase family 3 (KS3) domain. Active-site for beta-ketoacyl synthase activity residues include Cys564, His699, and His742. The interval Val926 to Cys1243 is malonyl-CoA:ACP transacylase (MAT) domain. The interval Thr1308–Ser1625 is product template (PT) domain. The segment at His1312 to Glu1447 is N-terminal hotdog fold. The 310-residue stretch at His1312–Asp1621 folds into the PKS/mFAS DH domain. His1344 (proton acceptor; for dehydratase activity) is an active-site residue. Positions Gln1475–Asp1621 are C-terminal hotdog fold. The active-site Proton donor; for dehydratase activity is the Asp1533. Low complexity predominate over residues Val1634–Ala1649. A disordered region spans residues Val1634–Glu1716. Polar residues predominate over residues Thr1664–Pro1684. The span at Thr1694–Ala1705 shows a compositional bias: basic and acidic residues. Residues Pro1715 to Cys1792 form the Carrier domain. Ser1752 bears the O-(pantetheine 4'-phosphoryl)serine mark.

Pantetheine 4'-phosphate serves as cofactor.

It catalyses the reaction holo-[ACP] + 8 malonyl-CoA + acetyl-CoA + 8 H(+) = 3,6,8,9-tetrahydroxy-1-oxo-3-(2-oxopropyl)-1,2,3,4-tetrahydroanthracene-2-carboxyl-[ACP] + 8 CO2 + 9 CoA + 2 H2O. It functions in the pathway secondary metabolite biosynthesis. Non-reducing polyketide synthase (NRPKS); part of the gene cluster that mediates the biosynthesis of asperthecin, an anthraquinone pigment. Catalyzes the formation of the aromatic polyketide from acetyl coenzyme A and seven malonyl coenzyme A molecules. Through its product template (PT) domain, catalyzes the cyclization of the polyketide backbone via C6-C11 aldolcondensation. Polyketide is subsequently hydrolyzed from the NRPKS by the action of the hydrolase aptB into endocrocin-9-anthrone. Endocrocin-9-anthrone is then oxidized into endocrocin by aptC. Endocrocin is likely to decarboxylate spontaneously to form emodin which explains why there is no decarboxylase in the asperthecin biosynthesis cluster. Finally, aptC or another endogenous oxygenase catalyzes additional oxidation steps to form asperthecin. This is Non-reducing polyketide synthase aptA from Emericella nidulans (strain FGSC A4 / ATCC 38163 / CBS 112.46 / NRRL 194 / M139) (Aspergillus nidulans).